Consider the following 164-residue polypeptide: Peptide deformylase (164 aa).

2 residues coordinate Fe cation: C87 and H129. The active site involves E130. H133 contacts Fe cation.

The protein belongs to the polypeptide deformylase family. Fe(2+) is required as a cofactor.

It catalyses the reaction N-terminal N-formyl-L-methionyl-[peptide] + H2O = N-terminal L-methionyl-[peptide] + formate. In terms of biological role, removes the formyl group from the N-terminal Met of newly synthesized proteins. Requires at least a dipeptide for an efficient rate of reaction. N-terminal L-methionine is a prerequisite for activity but the enzyme has broad specificity at other positions. This chain is Peptide deformylase, found in Thermotoga neapolitana (strain ATCC 49049 / DSM 4359 / NBRC 107923 / NS-E).